We begin with the raw amino-acid sequence, 500 residues long: Cytochrome P450 monooxygenase 103 (500 aa).

2 helical membrane passes run 1–21 (MASTPLLYVLVIILSAVYLLR) and 26–46 (PLYAIPAVGPSLPLLSYIGAL). Asn374 is a glycosylation site (N-linked (GlcNAc...) asparagine). Cys441 lines the heme pocket.

Belongs to the cytochrome P450 family. Heme serves as cofactor.

The protein localises to the membrane. It participates in secondary metabolite biosynthesis. Its function is as follows. Cytochrome P450 monooxygenase that is able to use testosterone as a substrate for oxidation. In Postia placenta (strain ATCC 44394 / Madison 698-R) (Brown rot fungus), this protein is Cytochrome P450 monooxygenase 103.